Reading from the N-terminus, the 546-residue chain is Glucose-6-phosphate isomerase (546 aa).

Catalysis depends on E357, which acts as the Proton donor. Catalysis depends on residues H389 and K509.

It belongs to the GPI family.

Its subcellular location is the cytoplasm. It carries out the reaction alpha-D-glucose 6-phosphate = beta-D-fructose 6-phosphate. Its pathway is carbohydrate biosynthesis; gluconeogenesis. It participates in carbohydrate degradation; glycolysis; D-glyceraldehyde 3-phosphate and glycerone phosphate from D-glucose: step 2/4. Catalyzes the reversible isomerization of glucose-6-phosphate to fructose-6-phosphate. This chain is Glucose-6-phosphate isomerase, found in Anaeromyxobacter dehalogenans (strain 2CP-1 / ATCC BAA-258).